The primary structure comprises 92 residues: Elongation factor 1-beta (92 aa).

The protein belongs to the EF-1-beta/EF-1-delta family.

In terms of biological role, promotes the exchange of GDP for GTP in EF-1-alpha/GDP, thus allowing the regeneration of EF-1-alpha/GTP that could then be used to form the ternary complex EF-1-alpha/GTP/AAtRNA. In Hyperthermus butylicus (strain DSM 5456 / JCM 9403 / PLM1-5), this protein is Elongation factor 1-beta.